The following is a 748-amino-acid chain: Proton-associated sugar transporter A (748 aa).

6 consecutive transmembrane segments (helical) span residues 93-113 (ILFGIEFSYAMETAYVTPVLL), 123-143 (SLVWFISPILGFLLQPLLGAW), 155-175 (RPFILVLAIGALLGLSLLLNG), 191-211 (WGLLLTVCGVVLMDFSADSAD), 233-253 (IHALLAGLGGGFGYVVGGIHW), and 268-288 (VIYLFTAVTLSVTTVLTLVSI). The disordered stretch occupies residues 294–339 (RPPSEKRAAMKSPSLPLPPSPPVLPEEGPGDSLPSHTATNFSSPIS). Positions 308–317 (LPLPPSPPVL) are enriched in pro residues. Thr-497 is modified (phosphothreonine). 6 consecutive transmembrane segments (helical) span residues 533 to 553 (GWLSFEGMLLFYTDFMGEVVF), 573 to 593 (VTMGCWGMCIYAFSAAFYSAI), 600 to 620 (FLSVRTLYFIAYLAFGLGTGL), 627 to 647 (LYVVLSLCITYGILFSTLCTL), 685 to 705 (FLAQILVSLVLGPLTSAVGSA), and 708 to 728 (VMYFSSLVSFLGCLYSSLFVI).

It belongs to the glycoside-pentoside-hexuronide (GPH) cation symporter transporter (TC 2.A.2) family. As to expression, expressed in adult heart, brain, muscle and kidney, with very strong expression in brain. Also expressed in fetal brain, kidney and lung.

The protein resides in the membrane. It carries out the reaction D-galactose(in) + H(+)(in) = D-galactose(out) + H(+)(out). It catalyses the reaction D-glucose(out) + H(+)(out) = D-glucose(in) + H(+)(in). In terms of biological role, proton-associated glucose transporter in the brain. The polypeptide is Proton-associated sugar transporter A (Homo sapiens (Human)).